The primary structure comprises 490 residues: MLSVIFDSFPAFSADAPRAVVLLCDAASGETFAALDKASAGAVSRAVALKGFKGEAGQSVVLPAPAEGLSQVVLAGVKPKGGAAVDAVAIENAAGRAVRLLEGVESAVLALSEGLEQFAPDAALGARLASYDFDVYRTKKSESRPVLKTLHVAVSDVAAAQTRWAALDAVSQGVILTRNLVSEPPNVLYPQTFTQRIEELRELGLTVEVLDEKAMTELGFGALLGVAQGSVHKPRTVIVRHNGGGSEAPLAFIGKGVTFDSGGISIKPAAGMDEMKTDMGGAATVIGLMSALARRKALVNAIGVVGLVENMVSGGAQRPGDIVRAYDGQTIEVLNTDAEGRLVLADVLSYTRKRFSPKLMVNLATLTGAIVVSLGYENAGLFSNSDALAKGLSEAGAQVGEGLWRMPMGEAYNRELNSDIADMKNIGGRPGSAILAAEFLKRFVGDTDWAHLDIAGTAWKTKASAIAPKGATGFGVRLLDCFVKAHEASA.

Lys-255 and Asp-260 together coordinate Mn(2+). Lys-267 is a catalytic residue. Positions 278, 337, and 339 each coordinate Mn(2+). Residue Arg-341 is part of the active site.

This sequence belongs to the peptidase M17 family. Mn(2+) is required as a cofactor.

The protein localises to the cytoplasm. It catalyses the reaction Release of an N-terminal amino acid, Xaa-|-Yaa-, in which Xaa is preferably Leu, but may be other amino acids including Pro although not Arg or Lys, and Yaa may be Pro. Amino acid amides and methyl esters are also readily hydrolyzed, but rates on arylamides are exceedingly low.. The catalysed reaction is Release of an N-terminal amino acid, preferentially leucine, but not glutamic or aspartic acids.. In terms of biological role, presumably involved in the processing and regular turnover of intracellular proteins. Catalyzes the removal of unsubstituted N-terminal amino acids from various peptides. The sequence is that of Probable cytosol aminopeptidase from Gluconobacter oxydans (strain 621H) (Gluconobacter suboxydans).